The chain runs to 115 residues: uncharacterized protein (115 aa).

This is an uncharacterized protein from Spirochaeta aurantia.